The primary structure comprises 182 residues: KxDL motif-containing protein 1 (182 aa).

Over residues 124 to 135 (TTTATSEQSTES) the composition is skewed to low complexity. The tract at residues 124–182 (TTTATSEQSTESCDTSPDVISPTISCCSEDPSQEHTDTPTSDSHEQPVLRDEGPDSADI) is disordered. Basic and acidic residues predominate over residues 155-176 (SQEHTDTPTSDSHEQPVLRDEG).

Belongs to the KXD1 family. In terms of assembly, associates with the BLOC-1 complex.

It is found in the lysosome membrane. In terms of biological role, as part of a BORC-like complex may play a role in lysosomes movement and localization at the cell periphery. Associated with the cytosolic face of lysosomes, this complex may couple lysosomes to microtubule plus-end-directed kinesin motor. May also be involved in the biogenesis of lysosome-related organelles such as melanosomes. This chain is KxDL motif-containing protein 1 (kxd1), found in Danio rerio (Zebrafish).